The following is a 437-amino-acid chain: Methylenetetrahydrofolate--tRNA-(uracil-5-)-methyltransferase TrmFO (437 aa).

Residue 10-15 (GAGLAG) participates in FAD binding.

It belongs to the MnmG family. TrmFO subfamily. It depends on FAD as a cofactor.

The protein resides in the cytoplasm. The catalysed reaction is uridine(54) in tRNA + (6R)-5,10-methylene-5,6,7,8-tetrahydrofolate + NADH + H(+) = 5-methyluridine(54) in tRNA + (6S)-5,6,7,8-tetrahydrofolate + NAD(+). It catalyses the reaction uridine(54) in tRNA + (6R)-5,10-methylene-5,6,7,8-tetrahydrofolate + NADPH + H(+) = 5-methyluridine(54) in tRNA + (6S)-5,6,7,8-tetrahydrofolate + NADP(+). Functionally, catalyzes the folate-dependent formation of 5-methyl-uridine at position 54 (M-5-U54) in all tRNAs. The sequence is that of Methylenetetrahydrofolate--tRNA-(uracil-5-)-methyltransferase TrmFO from Brevibacillus brevis (strain 47 / JCM 6285 / NBRC 100599).